Reading from the N-terminus, the 210-residue chain is Dephospho-CoA kinase (210 aa).

The DPCK domain maps to 4 to 202 (WVGLTGGIGS…AFYSGIFASK (199 aa)). Position 12–17 (12–17 (GSGKSA)) interacts with ATP.

Belongs to the CoaE family.

The protein localises to the cytoplasm. The enzyme catalyses 3'-dephospho-CoA + ATP = ADP + CoA + H(+). It participates in cofactor biosynthesis; coenzyme A biosynthesis; CoA from (R)-pantothenate: step 5/5. In terms of biological role, catalyzes the phosphorylation of the 3'-hydroxyl group of dephosphocoenzyme A to form coenzyme A. The chain is Dephospho-CoA kinase from Neisseria meningitidis serogroup B (strain ATCC BAA-335 / MC58).